Here is a 158-residue protein sequence, read N- to C-terminus: Pyruvoyl-dependent arginine decarboxylase (158 aa).

Residue Ser-44 is modified to Pyruvic acid (Ser).

This sequence belongs to the PdaD family. It depends on pyruvate as a cofactor.

The catalysed reaction is L-arginine + H(+) = agmatine + CO2. This chain is Pyruvoyl-dependent arginine decarboxylase, found in Pyrococcus furiosus (strain ATCC 43587 / DSM 3638 / JCM 8422 / Vc1).